Consider the following 91-residue polypeptide: C-C motif chemokine 5 (91 aa).

Positions 1–23 are cleaved as a signal peptide; it reads MKISAAALTIILTAAALCTPAPA. Disulfide bonds link Cys-33/Cys-57 and Cys-34/Cys-73.

Belongs to the intercrine beta (chemokine CC) family. As to expression, T-cell and macrophage specific.

The protein resides in the secreted. Functionally, chemoattractant for blood monocytes, memory T-helper cells and eosinophils. Causes the release of histamine from basophils and activates eosinophils. May activate several chemokine receptors including CCR1, CCR3, CCR4 and CCR5. May also be an agonist of the G protein-coupled receptor GPR75. Together with GPR75, may play a role in neuron survival through activation of a downstream signaling pathway involving the PI3, Akt and MAP kinases. By activating GPR75 may also play a role in insulin secretion by islet cells. In Mus musculus (Mouse), this protein is C-C motif chemokine 5 (Ccl5).